The following is a 387-amino-acid chain: Leucine aminopeptidase 1 (387 aa).

An N-terminal signal peptide occupies residues 1–18 (MKIRAALALSATASGVLA). Residues 19–87 (AVVPQQALLN…YPTLHQASNV (69 aa)) constitute a propeptide that is removed on maturation. An N-linked (GlcNAc...) asparagine glycan is attached at asparagine 179. Zn(2+) contacts are provided by histidine 187, aspartate 206, glutamate 245, and aspartate 272. A disulfide bridge connects residues cysteine 321 and cysteine 325. A Zn(2+)-binding site is contributed by histidine 354.

Belongs to the peptidase M28 family. M28E subfamily. Monomer. Zn(2+) serves as cofactor.

It is found in the secreted. Extracellular aminopeptidase that allows assimilation of proteinaceous substrates. The polypeptide is Leucine aminopeptidase 1 (lap1) (Aspergillus oryzae (strain ATCC 42149 / RIB 40) (Yellow koji mold)).